The primary structure comprises 1048 residues: 3-hydroxy-3-methylglutaryl-coenzyme A reductase (1048 aa).

Residues 1–32 (MDPVVKKPSPGGVQHRVTKGLRAIVGHACRHP) are Cytoplasmic-facing. A helical transmembrane segment spans residues 33–53 (IHTLLVTALTAATTHLHVLEG). Residues 54 to 220 (TYQAAHRGLA…FLHRVKHAET (167 aa)) lie on the Lumenal side of the membrane. The chain crosses the membrane as a helical span at residues 221–241 (VDLVIIGLSYLAMNMTVVSLF). In terms of domain architecture, SSD spans 222 to 403 (DLVIIGLSYL…FTFYATILCV (182 aa)). The Cytoplasmic segment spans residues 242 to 250 (RVMRQLGSR). The chain crosses the membrane as a helical span at residues 251–271 (FWLATSVLLSGAFAFVLGLGI). Residues 272-276 (TTTCD) are Lumenal-facing. Residues 277-297 (VPVDMLLLFEGIPYLVLTVGF) traverse the membrane as a helical segment. At 298–348 (EKPIQLTRAVLCVSEELRGGWQRPVPNGASSDDSRQSQLIPNIIQLAVDRE) the chain is on the cytoplasmic side. The helical transmembrane segment at 349–369 (GWYIVRSYLLEIGALALGAVL) threads the bilayer. Residues 370–377 (RPNDSLGH) are Lumenal-facing. Residue asparagine 372 is glycosylated (N-linked (GlcNAc...) asparagine). A helical membrane pass occupies residues 378 to 398 (FCFLAAWTLLIDAILLFTFYA). Over 399–439 (TILCVKLEITRIRSPGGLGQVNAKHPSGIFGHKVKSTNITW) the chain is Cytoplasmic. Residues 440–460 (WKLLTVGGFVLCHFLQLSPFF) traverse the membrane as a helical segment. Residues 461–542 (YRVMGEYMAN…LDGLESPLGR (82 aa)) are Lumenal-facing. 2 N-linked (GlcNAc...) asparagine glycosylation sites follow: asparagine 470 and asparagine 520. A helical membrane pass occupies residues 543-563 (LCLMGALVVSLVLNNHLIHAA). Topologically, residues 564–1048 (RWHAWPQARE…NRSAGATVKK (485 aa)) are cytoplasmic. The active-site Charge relay system is the glutamate 729. A CoA-binding site is contributed by 735 to 741 (SASRGCK). Residues 796–798 (SRF) and 823–831 (DAMGMNMIS) each bind NADP(+). The active-site Charge relay system is the lysine 863. 892 to 894 (VLK) contacts CoA. The active-site Charge relay system is aspartate 939. Residue 1034–1035 (AH) participates in CoA binding. Catalysis depends on histidine 1035, which acts as the Proton donor. NADP(+) is bound at residue 1039 to 1040 (NR).

The protein belongs to the HMG-CoA reductase family.

The protein localises to the endoplasmic reticulum membrane. The enzyme catalyses (R)-mevalonate + 2 NADP(+) + CoA = (3S)-3-hydroxy-3-methylglutaryl-CoA + 2 NADPH + 2 H(+). It participates in metabolic intermediate biosynthesis; (R)-mevalonate biosynthesis; (R)-mevalonate from acetyl-CoA: step 3/3. In terms of biological role, HMG-CoA reductase; part of the first module of ergosterol biosynthesis pathway that includes the early steps of the pathway, conserved across all eukaryotes, and which results in the formation of mevalonate from acetyl-coenzyme A (acetyl-CoA). In this module, the cytosolic acetyl-CoA acetyltransferase catalyzes the formation of acetoacetyl-CoA. The hydroxymethylglutaryl-CoA synthase then condenses acetyl-CoA with acetoacetyl-CoA to form HMG-CoA. The rate-limiting step of the early module is the reduction to mevalonate by the 3-hydroxy-3-methylglutaryl-coenzyme A (HMG-CoA) reductase. This Aspergillus terreus (strain NIH 2624 / FGSC A1156) protein is 3-hydroxy-3-methylglutaryl-coenzyme A reductase.